The following is a 257-amino-acid chain: MADTWSIGAHAFTSRLLVGTGKYPDFPTMQRALAASGAEVVTVAVRRLDLSKKGEESLLAWIPKGMKLLPNTAACFTAEEAIRTARLGRELEMGDLVKLEVIGDRRTLFPDVEGLIQAAKVLVKEGFTVLPYTNDDPVTAKKLEDAGCAAVMPLGAPIGSGLGLRNPYNLRIIMETVQVPVLVDAGVGTASDAALAMELGAVAVLMNTAIAEAKDPVLMAEAMRAGVEGGRKAFLAGRIPMKLHAAASSPMSGLIGT.

K98 (schiff-base intermediate with DXP) is an active-site residue. 1-deoxy-D-xylulose 5-phosphate-binding positions include G159, 185 to 186 (AG), and 207 to 208 (NT).

This sequence belongs to the ThiG family. As to quaternary structure, homotetramer. Forms heterodimers with either ThiH or ThiS.

The protein resides in the cytoplasm. The catalysed reaction is [ThiS sulfur-carrier protein]-C-terminal-Gly-aminoethanethioate + 2-iminoacetate + 1-deoxy-D-xylulose 5-phosphate = [ThiS sulfur-carrier protein]-C-terminal Gly-Gly + 2-[(2R,5Z)-2-carboxy-4-methylthiazol-5(2H)-ylidene]ethyl phosphate + 2 H2O + H(+). Its pathway is cofactor biosynthesis; thiamine diphosphate biosynthesis. In terms of biological role, catalyzes the rearrangement of 1-deoxy-D-xylulose 5-phosphate (DXP) to produce the thiazole phosphate moiety of thiamine. Sulfur is provided by the thiocarboxylate moiety of the carrier protein ThiS. In vitro, sulfur can be provided by H(2)S. This Anaeromyxobacter dehalogenans (strain 2CP-C) protein is Thiazole synthase.